A 1067-amino-acid chain; its full sequence is Ubiquitin conjugation factor E4 A (1067 aa).

Residues 33–57 (KEQLKQQSDELPASPDDSDNSVSES) form a disordered region. Lys-386 is modified (N6-acetyllysine). Positions 987–1061 (DACDEFLDPI…QRWLAERKQQ (75 aa)) constitute a U-box domain.

It belongs to the ubiquitin conjugation factor E4 family.

It localises to the cytoplasm. The catalysed reaction is S-ubiquitinyl-[E2 ubiquitin-conjugating enzyme]-L-cysteine + [acceptor protein]-L-lysine = [E2 ubiquitin-conjugating enzyme]-L-cysteine + N(6)-ubiquitinyl-[acceptor protein]-L-lysine.. Its pathway is protein modification; protein ubiquitination. In terms of biological role, ubiquitin-protein ligase that probably functions as an E3 ligase in conjunction with specific E1 and E2 ligases. May also function as an E4 ligase mediating the assembly of polyubiquitin chains on substrates ubiquitinated by another E3 ubiquitin ligase. Mediates 'Lys-48'-linked polyubiquitination of substrates. The protein is Ubiquitin conjugation factor E4 A of Bos taurus (Bovine).